The sequence spans 890 residues: Translation initiation factor IF-2 (890 aa).

Positions 45 to 304 (LIDHLNQKNS…LQQGFQKPAQ (260 aa)) are disordered. Polar residues predominate over residues 67–81 (STLNIPGTGGKSKSV). A compositionally biased stretch (basic and acidic residues) spans 92–217 (VKRDPQEAER…RMAEENKWID (126 aa)). The segment covering 252–266 (GRGRNAKAARPKKGN) has biased composition (basic residues). The segment covering 267 to 280 (KHAESKADREEARA) has biased composition (basic and acidic residues). The 170-residue stretch at 389–558 (PRAPVVTIMG…LLQAEVLELK (170 aa)) folds into the tr-type G domain. Positions 398-405 (GHVDHGKT) are G1. Residue 398 to 405 (GHVDHGKT) coordinates GTP. Positions 423–427 (GITQH) are G2. Residues 444-447 (DTPG) form a G3 region. Residues 444–448 (DTPGH) and 498–501 (NKID) contribute to the GTP site. A G4 region spans residues 498–501 (NKID). Residues 534–536 (SAK) are G5. At K808 the chain carries N6-acetyllysine.

Belongs to the TRAFAC class translation factor GTPase superfamily. Classic translation factor GTPase family. IF-2 subfamily.

It localises to the cytoplasm. Functionally, one of the essential components for the initiation of protein synthesis. Protects formylmethionyl-tRNA from spontaneous hydrolysis and promotes its binding to the 30S ribosomal subunits. Also involved in the hydrolysis of GTP during the formation of the 70S ribosomal complex. This is Translation initiation factor IF-2 from Escherichia coli O81 (strain ED1a).